A 258-amino-acid chain; its full sequence is Isoprenyl transferase 1 (258 aa).

The active site involves D39. Residue D39 participates in Mg(2+) binding. Residues 40 to 43 (GNRR), W44, R52, H57, and 85 to 87 (SND) contribute to the substrate site. Residue N88 is the Proton acceptor of the active site. Residues R92, R207, and 213–215 (RLS) each bind substrate. E226 contacts Mg(2+).

It belongs to the UPP synthase family. Homodimer. It depends on Mg(2+) as a cofactor.

In terms of biological role, catalyzes the condensation of isopentenyl diphosphate (IPP) with allylic pyrophosphates generating different type of terpenoids. In Tropheryma whipplei (strain TW08/27) (Whipple's bacillus), this protein is Isoprenyl transferase 1.